The chain runs to 103 residues: Histone H4 (103 aa).

The segment covering 1–14 (MSGRGKGGKGLGKG) has biased composition (gly residues). The interval 1 to 20 (MSGRGKGGKGLGKGGAKRHR) is disordered. N6-acetyl-N6-methyllysine; alternate is present on Lys-6. 3 positions are modified to N6-methyllysine; alternate: Lys-6, Lys-9, and Lys-13. Position 13 is an N6-acetyl-N6-methyllysine; alternate (Lys-13). A DNA-binding region spans residues 17–21 (KRHRK). Lys-92 is subject to N6-glutaryllysine.

Belongs to the histone H4 family. As to quaternary structure, the nucleosome is a histone octamer containing two molecules each of H2A, H2B, H3 and H4 assembled in one H3-H4 heterotetramer and two H2A-H2B heterodimers. The octamer wraps approximately 147 bp of DNA. In terms of processing, glutarylation at Lys-92 (H4K91glu) destabilizes nucleosomes by promoting dissociation of the H2A-H2B dimers from nucleosomes.

The protein resides in the nucleus. It is found in the chromosome. Core component of nucleosome. Nucleosomes wrap and compact DNA into chromatin, limiting DNA accessibility to the cellular machineries which require DNA as a template. Histones thereby play a central role in transcription regulation, DNA repair, DNA replication and chromosomal stability. DNA accessibility is regulated via a complex set of post-translational modifications of histones, also called histone code, and nucleosome remodeling. This Phanerodontia chrysosporium (White-rot fungus) protein is Histone H4 (H4.1).